A 744-amino-acid polypeptide reads, in one-letter code: Phosphoribosylformylglycinamidine synthase subunit PurL (744 aa).

H50 is a catalytic residue. ATP is bound by residues Y53 and K92. E94 lines the Mg(2+) pocket. Substrate-binding positions include 95-98 (SHNH) and R117. The Proton acceptor role is filled by H96. Position 118 (D118) interacts with Mg(2+). Q241 is a binding site for substrate. Residue D269 coordinates Mg(2+). 313–315 (ESQ) is a substrate binding site. ATP-binding residues include D494 and G531. Position 532 (N532) interacts with Mg(2+). S534 lines the substrate pocket.

It belongs to the FGAMS family. In terms of assembly, monomer. Part of the FGAM synthase complex composed of 1 PurL, 1 PurQ and 2 PurS subunits.

The protein resides in the cytoplasm. The enzyme catalyses N(2)-formyl-N(1)-(5-phospho-beta-D-ribosyl)glycinamide + L-glutamine + ATP + H2O = 2-formamido-N(1)-(5-O-phospho-beta-D-ribosyl)acetamidine + L-glutamate + ADP + phosphate + H(+). Its pathway is purine metabolism; IMP biosynthesis via de novo pathway; 5-amino-1-(5-phospho-D-ribosyl)imidazole from N(2)-formyl-N(1)-(5-phospho-D-ribosyl)glycinamide: step 1/2. Part of the phosphoribosylformylglycinamidine synthase complex involved in the purines biosynthetic pathway. Catalyzes the ATP-dependent conversion of formylglycinamide ribonucleotide (FGAR) and glutamine to yield formylglycinamidine ribonucleotide (FGAM) and glutamate. The FGAM synthase complex is composed of three subunits. PurQ produces an ammonia molecule by converting glutamine to glutamate. PurL transfers the ammonia molecule to FGAR to form FGAM in an ATP-dependent manner. PurS interacts with PurQ and PurL and is thought to assist in the transfer of the ammonia molecule from PurQ to PurL. The chain is Phosphoribosylformylglycinamidine synthase subunit PurL from Chelativorans sp. (strain BNC1).